A 90-amino-acid polypeptide reads, in one-letter code: UPF0297 protein LVIS_1222 (90 aa).

The protein belongs to the UPF0297 family.

The protein is UPF0297 protein LVIS_1222 of Levilactobacillus brevis (strain ATCC 367 / BCRC 12310 / CIP 105137 / JCM 1170 / LMG 11437 / NCIMB 947 / NCTC 947) (Lactobacillus brevis).